A 230-amino-acid chain; its full sequence is MAKHGKRYLEAAKKVDSTKFYSVDEAMKLAKETSYANFDATIEVAYNLSVDPKQADQQIRGALVLPNGTGKSKKVVVFAEGPQADQAKEAGADEVGSDDLVEKVQNGYLDFDVVIATPMMMAKVGRLGRILGPKGLMPNPKTGTVTMDVAKAVENQKAGQVEYRVDKQGLIHAPIGKASFDADKLAQNFDALRDVILRARPASAKGQYIKSVAVSATFGPGIHLDPLNLD.

This sequence belongs to the universal ribosomal protein uL1 family. In terms of assembly, part of the 50S ribosomal subunit.

In terms of biological role, binds directly to 23S rRNA. The L1 stalk is quite mobile in the ribosome, and is involved in E site tRNA release. Its function is as follows. Protein L1 is also a translational repressor protein, it controls the translation of the L11 operon by binding to its mRNA. This chain is Large ribosomal subunit protein uL1, found in Lactobacillus gasseri (strain ATCC 33323 / DSM 20243 / BCRC 14619 / CIP 102991 / JCM 1131 / KCTC 3163 / NCIMB 11718 / NCTC 13722 / AM63).